A 386-amino-acid polypeptide reads, in one-letter code: Protein salvador homolog 1 (386 aa).

2 positions are modified to phosphoserine: serine 95 and serine 137. WW domains are found at residues 200 to 233 and 235 to 268; these read LPLP…HPLE and EGLP…HPCA. Residue threonine 211 is modified to Phosphothreonine. In terms of domain architecture, SARAH spans 322-369; sequence ILKWELFQLADLDTYQGMLKLLFMKELEQIVKLYEAYRQALLTELENR. Positions 345–374 form a coiled coil; sequence MKELEQIVKLYEAYRQALLTELENRKQRQQ.

As to quaternary structure, homodimer. Stabilized through interaction with STK3/MST2 or STK4/MST1. Interacts (via SARAH domain) with isoform 1 of NEK2. Interacts with ESR1 only in the presence of STK3/MST2. Interacts with WTIP and AJUBA. Post-translationally, phosphorylated by STK3/MST2 and STK4/MST1. Phosphorylation is not required for SAV1 stability and may increase the number of protein binding sites on the scaffold molecule. Ubiquitously expressed in adult tissues with the highest level found in testis.

The protein resides in the nucleus. It is found in the cytoplasm. Regulator of STK3/MST2 and STK4/MST1 in the Hippo signaling pathway which plays a pivotal role in organ size control and tumor suppression by restricting proliferation and promoting apoptosis. The core of this pathway is composed of a kinase cascade wherein STK3/MST2 and STK4/MST1, in complex with its regulatory protein SAV1, phosphorylates and activates LATS1/2 in complex with its regulatory protein MOB1, which in turn phosphorylates and inactivates YAP1 oncoprotein and WWTR1/TAZ. Phosphorylation of YAP1 by LATS1/2 inhibits its translocation into the nucleus to regulate cellular genes important for cell proliferation, cell death, and cell migration. SAV1 is required for STK3/MST2 and STK4/MST1 activation and promotes cell-cycle exit and terminal differentiation in developing epithelial tissues. Plays a role in centrosome disjunction by regulating the localization of NEK2 to centrosomes, and its ability to phosphorylate CROCC and CEP250. In conjunction with STK3/MST2, activates the transcriptional activity of ESR1 through the modulation of its phosphorylation. This chain is Protein salvador homolog 1 (Sav1), found in Mus musculus (Mouse).